The chain runs to 231 residues: MKILRKLLFWLIVVPVLLVLLLQLYFFLQIGWWVNHNPGSTSFMRHQLSILQEKNPKAQLKHKWIPYNRISNNLKRAIIASEDSNFSEHEGVDWDALQKAYEKNIKKGKVVAGGSTITQQLAKNLFLSGDRSYLRKGQEVIITYMLEYWMDKERIFEIYLNVVEWGVGIFGAEAAAQHYYGVSAAQLGAPQAARLAVMLPNPRFYDGHRGTAYLARRTDLILRRMNSAALP.

Residues 7-27 (LLFWLIVVPVLLVLLLQLYFF) traverse the membrane as a helical segment.

Belongs to the glycosyltransferase 51 family.

The protein localises to the cell inner membrane. The catalysed reaction is [GlcNAc-(1-&gt;4)-Mur2Ac(oyl-L-Ala-gamma-D-Glu-L-Lys-D-Ala-D-Ala)](n)-di-trans,octa-cis-undecaprenyl diphosphate + beta-D-GlcNAc-(1-&gt;4)-Mur2Ac(oyl-L-Ala-gamma-D-Glu-L-Lys-D-Ala-D-Ala)-di-trans,octa-cis-undecaprenyl diphosphate = [GlcNAc-(1-&gt;4)-Mur2Ac(oyl-L-Ala-gamma-D-Glu-L-Lys-D-Ala-D-Ala)](n+1)-di-trans,octa-cis-undecaprenyl diphosphate + di-trans,octa-cis-undecaprenyl diphosphate + H(+). It functions in the pathway cell wall biogenesis; peptidoglycan biosynthesis. Peptidoglycan polymerase that catalyzes glycan chain elongation from lipid-linked precursors. This chain is Biosynthetic peptidoglycan transglycosylase, found in Janthinobacterium sp. (strain Marseille) (Minibacterium massiliensis).